Reading from the N-terminus, the 333-residue chain is Quinolinate synthase (333 aa).

2 residues coordinate iminosuccinate: histidine 41 and serine 58. Cysteine 103 serves as a coordination point for [4Fe-4S] cluster. Residues 129 to 131 (YIN) and serine 146 contribute to the iminosuccinate site. Position 189 (cysteine 189) interacts with [4Fe-4S] cluster. Iminosuccinate contacts are provided by residues 215-217 (HPE) and threonine 232. A [4Fe-4S] cluster-binding site is contributed by cysteine 282.

The protein belongs to the quinolinate synthase family. Type 2 subfamily. The cofactor is [4Fe-4S] cluster.

It localises to the cytoplasm. The catalysed reaction is iminosuccinate + dihydroxyacetone phosphate = quinolinate + phosphate + 2 H2O + H(+). It participates in cofactor biosynthesis; NAD(+) biosynthesis; quinolinate from iminoaspartate: step 1/1. Its function is as follows. Catalyzes the condensation of iminoaspartate with dihydroxyacetone phosphate to form quinolinate. The chain is Quinolinate synthase from Prochlorococcus marinus (strain MIT 9303).